A 283-amino-acid polypeptide reads, in one-letter code: 4-diphosphocytidyl-2-C-methyl-D-erythritol kinase (283 aa).

The active site involves lysine 10. Proline 99–serine 109 contacts ATP. The active site involves aspartate 141.

Belongs to the GHMP kinase family. IspE subfamily. Homodimer.

The catalysed reaction is 4-CDP-2-C-methyl-D-erythritol + ATP = 4-CDP-2-C-methyl-D-erythritol 2-phosphate + ADP + H(+). Its pathway is isoprenoid biosynthesis; isopentenyl diphosphate biosynthesis via DXP pathway; isopentenyl diphosphate from 1-deoxy-D-xylulose 5-phosphate: step 3/6. Catalyzes the phosphorylation of the position 2 hydroxy group of 4-diphosphocytidyl-2C-methyl-D-erythritol. The protein is 4-diphosphocytidyl-2-C-methyl-D-erythritol kinase of Citrobacter koseri (strain ATCC BAA-895 / CDC 4225-83 / SGSC4696).